We begin with the raw amino-acid sequence, 330 residues long: Phenylalanine--tRNA ligase alpha subunit (330 aa).

E257 lines the Mg(2+) pocket.

This sequence belongs to the class-II aminoacyl-tRNA synthetase family. Phe-tRNA synthetase alpha subunit type 1 subfamily. Tetramer of two alpha and two beta subunits. The cofactor is Mg(2+).

It is found in the cytoplasm. The enzyme catalyses tRNA(Phe) + L-phenylalanine + ATP = L-phenylalanyl-tRNA(Phe) + AMP + diphosphate + H(+). In Nostoc sp. (strain PCC 7120 / SAG 25.82 / UTEX 2576), this protein is Phenylalanine--tRNA ligase alpha subunit.